The sequence spans 139 residues: ATP synthase epsilon chain (139 aa).

This sequence belongs to the ATPase epsilon chain family. In terms of assembly, F-type ATPases have 2 components, CF(1) - the catalytic core - and CF(0) - the membrane proton channel. CF(1) has five subunits: alpha(3), beta(3), gamma(1), delta(1), epsilon(1). CF(0) has three main subunits: a, b and c.

It localises to the cell membrane. Functionally, produces ATP from ADP in the presence of a proton gradient across the membrane. The polypeptide is ATP synthase epsilon chain (Levilactobacillus brevis (strain ATCC 367 / BCRC 12310 / CIP 105137 / JCM 1170 / LMG 11437 / NCIMB 947 / NCTC 947) (Lactobacillus brevis)).